The sequence spans 287 residues: Pentatricopeptide repeat-containing protein At4g18975, chloroplastic (287 aa).

The transit peptide at 1-34 (MALCNLNPTQGIFPLQGLSKSQEFICFSLLQSPR) directs the protein to the chloroplast. 2 PPR repeats span residues 165-199 (TMGT…HTRS) and 201-235 (PRRL…KVSP).

It belongs to the PPR family. P subfamily.

Its subcellular location is the plastid. The protein resides in the chloroplast. The polypeptide is Pentatricopeptide repeat-containing protein At4g18975, chloroplastic (Arabidopsis thaliana (Mouse-ear cress)).